Reading from the N-terminus, the 89-residue chain is Protein FAM25A (89 aa).

This sequence belongs to the FAM25 family.

This is Protein FAM25A from Mus musculus (Mouse).